We begin with the raw amino-acid sequence, 414 residues long: 5-aminolevulinate synthase (414 aa).

The substrate site is built by arginine 22, serine 133, and lysine 152. Residues serine 185, histidine 213, and threonine 241 each contribute to the pyridoxal 5'-phosphate site. The active site involves lysine 244. Position 244 is an N6-(pyridoxal phosphate)lysine (lysine 244). Positions 273 and 274 each coordinate pyridoxal 5'-phosphate. Substrate is bound at residue threonine 359.

The protein belongs to the class-II pyridoxal-phosphate-dependent aminotransferase family. Homodimer. Pyridoxal 5'-phosphate serves as cofactor.

The enzyme catalyses succinyl-CoA + glycine + H(+) = 5-aminolevulinate + CO2 + CoA. It participates in porphyrin-containing compound metabolism; protoporphyrin-IX biosynthesis; 5-aminolevulinate from glycine: step 1/1. This is 5-aminolevulinate synthase (hemA) from Rickettsia conorii (strain ATCC VR-613 / Malish 7).